A 711-amino-acid chain; its full sequence is DNA ligase (711 aa).

A disordered region spans residues methionine 1–proline 21. Residues alanine 10–proline 21 are compositionally biased toward low complexity. NAD(+) contacts are provided by residues aspartate 52–aspartate 56, serine 101–leucine 102, and glutamate 146. Residue lysine 148 is the N6-AMP-lysine intermediate of the active site. 4 residues coordinate NAD(+): arginine 169, glutamate 205, lysine 322, and lysine 346. Residues cysteine 440, cysteine 443, cysteine 458, and cysteine 464 each contribute to the Zn(2+) site. The region spanning arginine 623–serine 711 is the BRCT domain.

It belongs to the NAD-dependent DNA ligase family. LigA subfamily. The cofactor is Mg(2+). Mn(2+) is required as a cofactor.

It carries out the reaction NAD(+) + (deoxyribonucleotide)n-3'-hydroxyl + 5'-phospho-(deoxyribonucleotide)m = (deoxyribonucleotide)n+m + AMP + beta-nicotinamide D-nucleotide.. In terms of biological role, DNA ligase that catalyzes the formation of phosphodiester linkages between 5'-phosphoryl and 3'-hydroxyl groups in double-stranded DNA using NAD as a coenzyme and as the energy source for the reaction. It is essential for DNA replication and repair of damaged DNA. In Cupriavidus pinatubonensis (strain JMP 134 / LMG 1197) (Cupriavidus necator (strain JMP 134)), this protein is DNA ligase.